The sequence spans 1588 residues: Ubiquitin carboxyl-terminal hydrolase 54 (1588 aa).

At Arg-12 the chain carries Omega-N-methylarginine. The 322-residue stretch at 31-352 (KGLSNEPGQN…QPLLLLYADP (322 aa)) folds into the USP domain. The active-site Nucleophile is Cys-42. 12 residues coordinate Zn(2+): His-67, Cys-69, Cys-74, Cys-77, His-133, Cys-145, Cys-150, His-153, Cys-166, Cys-169, Cys-225, and Cys-229. His-302 serves as the catalytic Proton acceptor. Basic and acidic residues-rich tracts occupy residues 380–391 (DSGHLTDSECNQ) and 424–434 (SEGETLKEKQA). 2 disordered regions span residues 380–447 (DSGH…TSRL) and 459–519 (HSRP…PTWR). Phosphoserine is present on Ser-424. 2 stretches are compositionally biased toward polar residues: residues 436 to 445 (RNASKSSSTS) and 459 to 471 (HSRP…TNAA). A compositionally biased stretch (low complexity) spans 499 to 512 (TESTSSEARSSSSS). Residues Ser-574, Ser-613, and Ser-616 each carry the phosphoserine modification. The segment covering 601 to 616 (ESGYESSERNSSSPVS) has biased composition (low complexity). The tract at residues 601–620 (ESGYESSERNSSSPVSLDAA) is disordered. Positions 678–712 (TSKSELDELQEEVARRAQEQELRKKREKELEAAKG) form a coiled coil. Disordered stretches follow at residues 801–839 (RSLQ…EQSV), 856–895 (DSEL…SPPG), 950–969 (EDNS…TTQD), 1093–1172 (TRDV…SRRR), and 1525–1562 (GSVL…SAGE). Positions 808–825 (QQQPPSQQPVQPSASLPS) are enriched in low complexity. A compositionally biased stretch (polar residues) spans 878-895 (SLVSPSPAQSVSQHSPPG). Ser-1138 carries the phosphoserine modification. Positions 1536 to 1547 (RRIDVPPDDDGR) are enriched in basic and acidic residues.

It belongs to the peptidase C19 family.

The enzyme catalyses Thiol-dependent hydrolysis of ester, thioester, amide, peptide and isopeptide bonds formed by the C-terminal Gly of ubiquitin (a 76-residue protein attached to proteins as an intracellular targeting signal).. Deubiquitinase that specifically mediates 'Lys-63'-linked deubiquitination of substrates with a polyubiquitin chain composed of at least 3 ubiquitins. Specifically recognizes ubiquitin chain in position S2 and catalyzes cleavage of polyubiquitin within 'Lys-63'-linked chains. Not able to deubiquitinate substrates with shorter ubiquitin chains. Mediates deubiquitination of PLK4, maintaining PLK4 stability by reducing its ubiquitination-mediated degradation. The protein is Ubiquitin carboxyl-terminal hydrolase 54 (Usp54) of Rattus norvegicus (Rat).